Consider the following 457-residue polypeptide: Acetylcholine receptor subunit alpha (457 aa).

The N-terminal stretch at methionine 1–glycine 20 is a signal peptide. At serine 21 to leucine 232 the chain is on the extracellular side. 2 disulfide bridges follow: cysteine 148–cysteine 162 and cysteine 212–cysteine 213. Asparagine 161 carries an N-linked (GlcNAc...) asparagine glycan. Residues tyrosine 233–phenylalanine 253 form a helical membrane-spanning segment. The Cytoplasmic portion of the chain corresponds to tyrosine 254–threonine 264. A helical membrane pass occupies residues leucine 265–proline 285. At serine 286 to lysine 296 the chain is on the extracellular side. The chain crosses the membrane as a helical span at residues tyrosine 297–asparagine 317. Over threonine 318–aspartate 427 the chain is Cytoplasmic. Residues histidine 428 to glycine 448 traverse the membrane as a helical segment. The Extracellular portion of the chain corresponds to arginine 449–glycine 457.

Belongs to the ligand-gated ion channel (TC 1.A.9) family. Acetylcholine receptor (TC 1.A.9.1) subfamily. Alpha-1/CHRNA1 sub-subfamily. As to quaternary structure, one of the alpha chains that assemble within the acetylcholine receptor, a pentamer of two alpha chains, a beta, a delta, and a gamma (in immature muscle) or epsilon (in mature muscle) chains. The muscle heteropentamer composed of alpha-1, beta-1, delta, epsilon subunits interacts with the alpha-conotoxin ImII. Is able to interact with other subunits of the acetylcholine receptor but is not assembled into functional acetylcholine-gated cation-selective channels. Isoform 1 is only expressed in skeletal muscle. Isoform 2 is constitutively expressed in skeletal muscle, brain, heart, kidney, liver, lung and thymus.

It localises to the postsynaptic cell membrane. It is found in the cell membrane. It carries out the reaction K(+)(in) = K(+)(out). The catalysed reaction is Na(+)(in) = Na(+)(out). Functionally, upon acetylcholine binding, the AChR responds by an extensive change in conformation that affects all subunits and leads to opening of an ion-conducting channel across the plasma membrane. Its function is as follows. Non functional acetylcholine receptor alpha subunit which is not integrated into functional acetylcholine-gated cation-selective channels. This chain is Acetylcholine receptor subunit alpha, found in Homo sapiens (Human).